The following is an 845-amino-acid chain: Envelope glycoprotein B (845 aa).

The first 41 residues, 1-41, serve as a signal peptide directing secretion; the sequence is MSFTDQTYTRSCMHTCITRDHRLYGIVIISLLLLLDNSVFC. Topologically, residues 42–727 are virion surface; that stretch reads QNENKVIDIK…SGVASFLQNP (686 aa). 5 disulfide bridges follow: Cys62-Cys523, Cys80-Cys479, Cys153-Cys218, Cys310-Cys358, and Cys552-Cys591. The involved in fusion and/or binding to host membrane stretch occupies residues 120–126; it reads RYADVFS. Asn175 is a glycosylation site (N-linked (GlcNAc...) asparagine; by host). Positions 204-212 are involved in fusion and/or binding to host membrane; sequence LPGTWLRKT. Asn328, Asn388, Asn414, Asn420, Asn425, Asn564, and Asn632 each carry an N-linked (GlcNAc...) asparagine; by host glycan. Positions 677 to 725 are hydrophobic membrane proximal region; it reads LEQAIVTKPYVPPAGMQQALQGLSGVGSVITGTLGAMQSLVSGVASFLQ. The helical transmembrane segment at 728 to 748 threads the bilayer; the sequence is FGGTLSIILIGCIIVGVIIIY. Topologically, residues 749 to 845 are intravirion; sequence NRMNQSRGSP…GYTTLSSMNI (97 aa). An Internalization motif motif is present at residues 837 to 840; that stretch reads YTTL.

The protein belongs to the herpesviridae glycoprotein B family. Homotrimer; disulfide-linked. Binds to heparan sulfate proteoglycans. Interacts with gH/gL heterodimer. A proteolytic cleavage by host furin generates two subunits that remain linked by disulfide bonds.

The protein localises to the virion membrane. It is found in the host cell membrane. It localises to the host endosome membrane. Its subcellular location is the host Golgi apparatus membrane. Its function is as follows. Envelope glycoprotein that forms spikes at the surface of virion envelope. Essential for the initial attachment to heparan sulfate moieties of the host cell surface proteoglycans. Involved in fusion of viral and cellular membranes leading to virus entry into the host cell. Following initial binding to its host receptors, membrane fusion is mediated by the fusion machinery composed at least of gB and the heterodimer gH/gL. May be involved in the fusion between the virion envelope and the outer nuclear membrane during virion egress. The sequence is that of Envelope glycoprotein B from Elephas maximus (Indian elephant).